Here is a 344-residue protein sequence, read N- to C-terminus: Phosphoribosylformylglycinamidine cyclo-ligase (344 aa).

It belongs to the AIR synthase family.

The protein localises to the cytoplasm. The enzyme catalyses 2-formamido-N(1)-(5-O-phospho-beta-D-ribosyl)acetamidine + ATP = 5-amino-1-(5-phospho-beta-D-ribosyl)imidazole + ADP + phosphate + H(+). It participates in purine metabolism; IMP biosynthesis via de novo pathway; 5-amino-1-(5-phospho-D-ribosyl)imidazole from N(2)-formyl-N(1)-(5-phospho-D-ribosyl)glycinamide: step 2/2. The polypeptide is Phosphoribosylformylglycinamidine cyclo-ligase (Exiguobacterium sibiricum (strain DSM 17290 / CCUG 55495 / CIP 109462 / JCM 13490 / 255-15)).